Reading from the N-terminus, the 215-residue chain is HTH-type transcriptional repressor FabR (215 aa).

An HTH tetR-type domain is found at 10–70 (KTRRSLVEAA…TMVDESGLML (61 aa)). The segment at residues 33 to 52 (SLREVAREAVIAPTSFYRHF) is a DNA-binding region (H-T-H motif).

As to quaternary structure, homodimer.

It is found in the cytoplasm. Functionally, represses the transcription of fabB, involved in unsaturated fatty acid (UFA) biosynthesis. By controlling UFA production, FabR directly influences the physical properties of the membrane bilayer. The polypeptide is HTH-type transcriptional repressor FabR (Escherichia coli (strain K12 / MC4100 / BW2952)).